The sequence spans 243 residues: MKIDILTLFPEMFAPLEHSIVGKAKEKGLLDIHYHNFRDHAEKARHVDDEPYGGGQGMLLRAQPIFDTMDSIQATKPRVILLDPAGKPFHQSYAEELALEEELIFICGHYEGYDERIKTLITDEISLGDFVLTGGELAAMTMIDATVRLIPNVLGKQASHQEDSFSSGLLEYPQYTRPYDYRGMKVPDVLMSGHHEHIRLWRMEQSLKKTYLRRPDLLETYDFSDEERRIFDKIKSELSEGEN.

S-adenosyl-L-methionine contacts are provided by residues glycine 108 and leucine 127–leucine 132.

It belongs to the RNA methyltransferase TrmD family. In terms of assembly, homodimer.

The protein localises to the cytoplasm. The catalysed reaction is guanosine(37) in tRNA + S-adenosyl-L-methionine = N(1)-methylguanosine(37) in tRNA + S-adenosyl-L-homocysteine + H(+). Specifically methylates guanosine-37 in various tRNAs. The chain is tRNA (guanine-N(1)-)-methyltransferase from Streptococcus equi subsp. zooepidemicus (strain MGCS10565).